Reading from the N-terminus, the 699-residue chain is eEF1A lysine and N-terminal methyltransferase (699 aa).

Methionine 1 is subject to N-acetylmethionine. Residue serine 267 is modified to Phosphoserine. Positions valine 433–alanine 459 are disordered. Basic residues predominate over residues lysine 436–glutamine 448.

Belongs to the methyltransferase superfamily. Forms a tripartite complex containing GAB1, METTL13 and SPRY2. Within the complex interacts with GAB1 and SPRY2.

The protein resides in the cytoplasm. Its subcellular location is the nucleus. It localises to the mitochondrion. It carries out the reaction L-lysyl-[protein] + S-adenosyl-L-methionine = N(6)-methyl-L-lysyl-[protein] + S-adenosyl-L-homocysteine + H(+). The enzyme catalyses N(6)-methyl-L-lysyl-[protein] + S-adenosyl-L-methionine = N(6),N(6)-dimethyl-L-lysyl-[protein] + S-adenosyl-L-homocysteine + H(+). The catalysed reaction is N-terminal glycyl-L-lysyl-L-glutamyl-[protein] + 3 S-adenosyl-L-methionine = N-terminal N,N,N-trimethyl-glycyl-L-lysyl-L-glutamyl-[protein] + 3 S-adenosyl-L-homocysteine + 3 H(+). With respect to regulation, protein N-terminal methyltransferase activity is inhibited by GTP and GDP. Dual methyltransferase that catalyzes methylation of elongation factor 1-alpha (EEF1A1 and EEF1A2) at two different positions, and is therefore involved in the regulation of mRNA translation. Via its C-terminus, methylates EEF1A1 and EEF1A2 at the N-terminal residue 'Gly-2'. Via its N-terminus dimethylates EEF1A1 and EEF1A2 at residue 'Lys-55'. Has no activity towards core histones H2A, H2B, H3 and H4. The chain is eEF1A lysine and N-terminal methyltransferase from Homo sapiens (Human).